The sequence spans 559 residues: Poly(3-hydroxyalkanoate) polymerase 1 (559 aa).

Cys296 is an active-site residue.

This sequence belongs to the PHA/PHB synthase family. Type II PhaC subfamily.

Its pathway is biopolymer metabolism; poly-(R)-3-hydroxybutanoate biosynthesis. Synthesizes poly(3-hydroxyalkanoates) (PHA), complements a mutant of P.putida that does not make PHA. This is Poly(3-hydroxyalkanoate) polymerase 1 from Ectopseudomonas oleovorans (Pseudomonas oleovorans).